The chain runs to 51 residues: Insulin (51 aa).

Intrachain disulfides connect cysteine 7–cysteine 37, cysteine 19–cysteine 50, and cysteine 36–cysteine 41.

The protein belongs to the insulin family. In terms of assembly, heterodimer of a B chain and an A chain linked by two disulfide bonds.

It localises to the secreted. Its function is as follows. Insulin decreases blood glucose concentration. It increases cell permeability to monosaccharides, amino acids and fatty acids. It accelerates glycolysis, the pentose phosphate cycle, and glycogen synthesis in liver. The protein is Insulin (INS) of Alligator mississippiensis (American alligator).